A 424-amino-acid polypeptide reads, in one-letter code: Mitogen-activated protein kinase 9 (424 aa).

The Protein kinase domain maps to 26-321; the sequence is YQQLKPIGSG…VDEALRHPYI (296 aa). Residues 32–40 and Lys-55 each bind ATP; that span reads IGSGAQGIV. Asp-151 (proton acceptor) is an active-site residue. Thr-183 carries the post-translational modification Phosphothreonine; by MAP2K7. A TXY motif is present at residues 183 to 185; the sequence is TPY. Tyr-185 carries the post-translational modification Phosphotyrosine; by MAP2K4. Positions 368-424 are disordered; the sequence is KNGVVKDQPSDAAVSSNATPSQSSSINDISSMSTEQTLASDTDSSLDASTGPLEGCR. Low complexity predominate over residues 388-417; that stretch reads SQSSSINDISSMSTEQTLASDTDSSLDAST.

It belongs to the protein kinase superfamily. CMGC Ser/Thr protein kinase family. MAP kinase subfamily. Interacts with MECOM. Interacts with DCLK2. Binds to at least four scaffolding proteins, MAPK8IP1/JIP-1, MAPK8IP2/JIP-2, MAPK8IP3/JIP-3/JSAP1 and SPAG9/MAPK8IP4/JIP-4. These proteins also bind other components of the JNK signaling pathway. Interacts with NFATC4. Interacts with ATF7; the interaction does not phosphorylate ATF7 but acts as a docking site for ATF7-associated partners such as JUN. Interacts with BCL10. Interacts with CTNNB1 and GSK3B. Interacts with MAPKBP1. Interacts with POU5F1; phosphorylates POU5F1 at 'Ser-355'. Found in a complex with SH3RF1, RAC2, MAP3K7/TAK1, MAP2K7/MKK7, MAPK8IP1/JIP1 and MAPK8/JNK1. Requires Mg(2+) as cofactor. In terms of processing, dually phosphorylated on Thr-183 and Tyr-185 by MAP2K7 and MAP2K4, which activates the enzyme. Autophosphorylated in vitro.

It is found in the cytoplasm. Its subcellular location is the nucleus. The catalysed reaction is L-seryl-[protein] + ATP = O-phospho-L-seryl-[protein] + ADP + H(+). It carries out the reaction L-threonyl-[protein] + ATP = O-phospho-L-threonyl-[protein] + ADP + H(+). With respect to regulation, activated by threonine and tyrosine phosphorylation by either of two dual specificity kinases, MAP2K4 and MAP2K7. MAP2K4 shows a strong preference for Tyr-185 while MAP2K7 phosphorylates Tyr-183 preferentially. Inhibited by dual specificity phosphatases, such as DUSP1. Functionally, serine/threonine-protein kinase involved in various processes such as cell proliferation, differentiation, migration, transformation and programmed cell death. Extracellular stimuli such as pro-inflammatory cytokines or physical stress stimulate the stress-activated protein kinase/c-Jun N-terminal kinase (SAP/JNK) signaling pathway. In this cascade, two dual specificity kinases MAP2K4/MKK4 and MAP2K7/MKK7 phosphorylate and activate MAPK9/JNK2. In turn, MAPK9/JNK2 phosphorylates a number of transcription factors, primarily components of AP-1 such as JUN and ATF2 and thus regulates AP-1 transcriptional activity. In response to oxidative or ribotoxic stresses, inhibits rRNA synthesis by phosphorylating and inactivating the RNA polymerase 1-specific transcription initiation factor RRN3. Promotes stressed cell apoptosis by phosphorylating key regulatory factors including TP53 and YAP1. In T-cells, MAPK8 and MAPK9 are required for polarized differentiation of T-helper cells into Th1 cells. Upon T-cell receptor (TCR) stimulation, is activated by CARMA1, BCL10, MAP2K7 and MAP3K7/TAK1 to regulate JUN protein levels. Plays an important role in the osmotic stress-induced epithelial tight-junctions disruption. When activated, promotes beta-catenin/CTNNB1 degradation and inhibits the canonical Wnt signaling pathway. Also participates in neurite growth in spiral ganglion neurons. Phosphorylates the CLOCK-BMAL1 heterodimer and plays a role in the regulation of the circadian clock. Phosphorylates POU5F1, which results in the inhibition of POU5F1's transcriptional activity and enhances its proteasomal degradation. Phosphorylates ALKBH5 in response to reactive oxygen species (ROS), promoting ALKBH5 sumoylation and inactivation. In terms of biological role, MAPK9 isoforms display different binding patterns: alpha-1 and alpha-2 preferentially bind to JUN, whereas beta-1 and beta-2 bind to ATF2. However, there is no correlation between binding and phosphorylation, which is achieved at about the same efficiency by all isoforms. JUNB is not a substrate for JNK2 alpha-2, and JUND binds only weakly to it. The protein is Mitogen-activated protein kinase 9 (MAPK9) of Homo sapiens (Human).